A 413-amino-acid chain; its full sequence is Phosphopentomutase (413 aa).

Mn(2+) contacts are provided by Asp-11, Asp-306, His-311, Asp-347, His-348, and His-359.

This sequence belongs to the phosphopentomutase family. Mn(2+) is required as a cofactor.

It is found in the cytoplasm. The catalysed reaction is 2-deoxy-alpha-D-ribose 1-phosphate = 2-deoxy-D-ribose 5-phosphate. It carries out the reaction alpha-D-ribose 1-phosphate = D-ribose 5-phosphate. It participates in carbohydrate degradation; 2-deoxy-D-ribose 1-phosphate degradation; D-glyceraldehyde 3-phosphate and acetaldehyde from 2-deoxy-alpha-D-ribose 1-phosphate: step 1/2. Isomerase that catalyzes the conversion of deoxy-ribose 1-phosphate (dRib-1-P) and ribose 1-phosphate (Rib-1-P) to deoxy-ribose 5-phosphate (dRib-5-P) and ribose 5-phosphate (Rib-5-P), respectively. The protein is Phosphopentomutase of Helicobacter pylori (strain Shi470).